A 153-amino-acid polypeptide reads, in one-letter code: 6,7-dimethyl-8-ribityllumazine synthase (153 aa).

Residues Phe22, 56 to 58, and 80 to 82 contribute to the 5-amino-6-(D-ribitylamino)uracil site; these read AFE and TVI. 85–86 contributes to the (2S)-2-hydroxy-3-oxobutyl phosphate binding site; that stretch reads ST. The Proton donor role is filled by His88. Phe113 is a 5-amino-6-(D-ribitylamino)uracil binding site. Arg127 is a binding site for (2S)-2-hydroxy-3-oxobutyl phosphate.

This sequence belongs to the DMRL synthase family. Forms an icosahedral capsid composed of 60 subunits, arranged as a dodecamer of pentamers.

It carries out the reaction (2S)-2-hydroxy-3-oxobutyl phosphate + 5-amino-6-(D-ribitylamino)uracil = 6,7-dimethyl-8-(1-D-ribityl)lumazine + phosphate + 2 H2O + H(+). Its pathway is cofactor biosynthesis; riboflavin biosynthesis; riboflavin from 2-hydroxy-3-oxobutyl phosphate and 5-amino-6-(D-ribitylamino)uracil: step 1/2. Catalyzes the formation of 6,7-dimethyl-8-ribityllumazine by condensation of 5-amino-6-(D-ribitylamino)uracil with 3,4-dihydroxy-2-butanone 4-phosphate. This is the penultimate step in the biosynthesis of riboflavin. This chain is 6,7-dimethyl-8-ribityllumazine synthase, found in Haemophilus ducreyi (strain 35000HP / ATCC 700724).